The sequence spans 938 residues: Isoleucine--tRNA ligase (938 aa).

Positions 58–68 match the 'HIGH' region motif; the sequence is PYANGNIHIGH. E563 lines the L-isoleucyl-5'-AMP pocket. The 'KMSKS' region motif lies at 604–608; the sequence is KMSKS. An ATP-binding site is contributed by K607. Residues C903, C906, C921, and C924 each coordinate Zn(2+).

This sequence belongs to the class-I aminoacyl-tRNA synthetase family. IleS type 1 subfamily. Monomer. The cofactor is Zn(2+).

It localises to the cytoplasm. The enzyme catalyses tRNA(Ile) + L-isoleucine + ATP = L-isoleucyl-tRNA(Ile) + AMP + diphosphate. Catalyzes the attachment of isoleucine to tRNA(Ile). As IleRS can inadvertently accommodate and process structurally similar amino acids such as valine, to avoid such errors it has two additional distinct tRNA(Ile)-dependent editing activities. One activity is designated as 'pretransfer' editing and involves the hydrolysis of activated Val-AMP. The other activity is designated 'posttransfer' editing and involves deacylation of mischarged Val-tRNA(Ile). This is Isoleucine--tRNA ligase from Buchnera aphidicola subsp. Schizaphis graminum (strain Sg).